The primary structure comprises 554 residues: Glutamine--tRNA ligase (554 aa).

A 'HIGH' region motif is present at residues 34–44; sequence PEPNGYLHIGH. Residues 35-37 and 41-47 contribute to the ATP site; these read EPN and HIGHAKS. Residues aspartate 67 and tyrosine 212 each contribute to the L-glutamine site. Residues threonine 231, 261 to 262, and 269 to 271 contribute to the ATP site; these read RL and MSK. Residues 268 to 272 carry the 'KMSKS' region motif; that stretch reads VMSKR. Positions 317-324 are interaction with tRNA; the sequence is TKQDNTIE.

Belongs to the class-I aminoacyl-tRNA synthetase family. In terms of assembly, monomer.

The protein resides in the cytoplasm. It catalyses the reaction tRNA(Gln) + L-glutamine + ATP = L-glutaminyl-tRNA(Gln) + AMP + diphosphate. The chain is Glutamine--tRNA ligase from Shigella flexneri serotype 5b (strain 8401).